We begin with the raw amino-acid sequence, 246 residues long: tRNA (guanine-N(1)-)-methyltransferase (246 aa).

S-adenosyl-L-methionine contacts are provided by residues Gly-113 and 133 to 138; that span reads IGDYVL.

The protein belongs to the RNA methyltransferase TrmD family. In terms of assembly, homodimer.

It is found in the cytoplasm. It catalyses the reaction guanosine(37) in tRNA + S-adenosyl-L-methionine = N(1)-methylguanosine(37) in tRNA + S-adenosyl-L-homocysteine + H(+). Specifically methylates guanosine-37 in various tRNAs. This is tRNA (guanine-N(1)-)-methyltransferase from Yersinia pseudotuberculosis serotype O:1b (strain IP 31758).